The chain runs to 528 residues: MDTQSDYVVVGTGSAGAVVASRLSTDPATTVVALEAGPRDKNRFIGVPAAFSKLFRSEIDWDYLTEPQPELDGREIYWPRGKVLGGSSSMNAMMWVRGFASDYDEWAARAGPRWSYADVLGYFRRIENVTAAWHFVSGDDSGVTGPLHISRQRSPRSVTAAWLAAARECGFAAARPNSPRPEGFCETVVTQRRGARFSTADAYLKPAMRRKNLRVLTGATATRVVIDGDRAVGVEYQSDGQTRIVYARREVVLCAGAVNSPQLLMLSGIGDRDHLAEHDIDTVYHAPEVGCNLLDHLVTVLGFDVEKDSLFAAEKPGQLISYLLRRRGMLTSNVGEAYGFVRSRPELKLPDLELIFAPAPFYDEALVPPAGHGVVFGPILVAPQSRGQITLRSADPHAKPVIEPRYLSDLGGVDRAAMMAGLRICARIAQARPLRDLLGSIARPRNSTELDEATLELALATCSHTLYHPMGTCRMGSDEASVVDPQLRVRGVDGLRVADASVMPSTVRGHTHAPSVLIGEKAADLIRS.

An FAD-binding site is contributed by 6–35 (DYVVVGTGSAGAVVASRLSTDPATTVVALE). H468 serves as the catalytic Proton acceptor.

This sequence belongs to the GMC oxidoreductase family. FAD is required as a cofactor.

This is an uncharacterized protein from Mycobacterium bovis (strain ATCC BAA-935 / AF2122/97).